We begin with the raw amino-acid sequence, 541 residues long: Effector protein hopAB1 (541 aa).

3 disordered regions span residues 1–94, 168–222, and 317–338; these read MPGI…EAQQ, QRAL…RHPQ, and RQTT…SGRR. The segment covering 18-31 has biased composition (basic and acidic residues); the sequence is TDGEPVTEREHDSS. The span at 183-196 shows a compositional bias: low complexity; that stretch reads SSSGSSQRSLIGRS.

Belongs to the HopAB family.

It localises to the secreted. Effector protein that plays different roles depending on the species and plant cultivars that interact with the pathogen. Acts as a virulence determinant by enhancing the development of disease symptoms and bacterial growth. Acts as an avirulence factor by eliciting hypersensitive response (HR) and plant resistance. This chain is Effector protein hopAB1 (hopAB1), found in Pseudomonas savastanoi (Pseudomonas syringae pv. savastanoi).